The sequence spans 443 residues: ATP-dependent protease ATPase subunit HslU (443 aa).

Residues isoleucine 18, 60–65 (GVGKTE), aspartate 256, glutamate 321, and arginine 393 each bind ATP.

This sequence belongs to the ClpX chaperone family. HslU subfamily. As to quaternary structure, a double ring-shaped homohexamer of HslV is capped on each side by a ring-shaped HslU homohexamer. The assembly of the HslU/HslV complex is dependent on binding of ATP.

The protein localises to the cytoplasm. Its function is as follows. ATPase subunit of a proteasome-like degradation complex; this subunit has chaperone activity. The binding of ATP and its subsequent hydrolysis by HslU are essential for unfolding of protein substrates subsequently hydrolyzed by HslV. HslU recognizes the N-terminal part of its protein substrates and unfolds these before they are guided to HslV for hydrolysis. The protein is ATP-dependent protease ATPase subunit HslU of Shigella boydii serotype 18 (strain CDC 3083-94 / BS512).